We begin with the raw amino-acid sequence, 486 residues long: Cardiolipin synthase A (486 aa).

A run of 2 helical transmembrane segments spans residues Thr3 to Val23 and Met38 to Val58. 2 PLD phosphodiesterase domains span residues Met219–Arg246 and Glu399–Ser426. Catalysis depends on residues His224, Lys226, Asp231, His404, Lys406, and Asp411.

Belongs to the phospholipase D family. Cardiolipin synthase subfamily. ClsA sub-subfamily.

Its subcellular location is the cell inner membrane. The enzyme catalyses 2 a 1,2-diacyl-sn-glycero-3-phospho-(1'-sn-glycerol) = a cardiolipin + glycerol. In terms of biological role, catalyzes the reversible phosphatidyl group transfer from one phosphatidylglycerol molecule to another to form cardiolipin (CL) (diphosphatidylglycerol) and glycerol. This chain is Cardiolipin synthase A, found in Escherichia coli O157:H7 (strain EC4115 / EHEC).